The chain runs to 1012 residues: MDFFNPFIDPTRGGPRNTVRQPTPSQSPTVPSETRVCRLIPACFQTPGRPGVVAVDTTFPPTYFQGPKRGEVFAGETGSIWKTRRGQARNAPMSHLIFHVYDIVETTYTADRCEDVPFSFQTDIIPSGTVLKLLGRTLDGASVCVNVFRQRCYFYTLAPQGVNLTHVLQQALQAGFGRASCGFSTEPVRKKILRAYDTQQYAVQKITLSSSPMMRTLSDRLTTCGCEVFESNVDAIRRFVLDHGFSTFGWYECSNPAPRTQARDSWTELEFDCSWEDLKFIPERTEWPPYTILSFDIECMGEKGFPNATQDEDMIIQISCVLHTVGNDKPYTRMLLGLGTCDPLPGVEVFEFPSEYDMLAAFLSMLRDYNVEFITGYNIANFDLPYIIARATQVYDFKLQDFTKIKTGSVFEVHQPRGGSDGGNFMRSQSKVKISGIVPIDMYQVCREKLSLSDYKLDTVAKQCLGRQKDDISYKDIPPLFKSGPDGRAKVGNYCVIDSVLVMDLLLRFQTHVEISEIAKLAKIPTRRVLTDGQQIRVFSCLLEAAATEGYILPVPKGDAVSGYQGATVISPSPGFYDDPVLVVDFASLYPSIIQAHNLCYSTLIPGDSLHLHPHLSPDDYETFVLSGGPVHFVKKHKRESLLAKLLTVWLAKRKEIRKTLASCTDPALKTILDKQQLAIKVTCNAVYGFTGVASGILPCLNIAETVTLQGRKMLERSQAFVEAISPERLAGLLRRPVDVSPDARFKVIYGDTDSLFICCMGFNMDSVSDFAEELASITTNTLFRSPIKLEAEKIFKCLLLLTKKRYVGVLSDDKVLMKGVDLIRKTACRFVQEKSSQVLDLILREPSVKAAAKLISGQATDWVYREGLPEGFVKIIQVLNASHRELCERSVPVDKLTFTTELSRPLADYKTQNLPHLTVYQKLQARQEELPQIHDRIPYVFVDAPGSLRSELAEHPEYVKQHGLRVAVDLYFDKLVHAVANIIQCLFQNNTSATVAILYNFLDIPVTFPTP.

The disordered stretch occupies residues 1–31 (MDFFNPFIDPTRGGPRNTVRQPTPSQSPTVP). The span at 21–31 (QPTPSQSPTVP) shows a compositional bias: low complexity.

It belongs to the DNA polymerase type-B family. Forms a complex with the ssDNA-binding protein, the DNA polymerase processivity factor, and the alkaline exonuclease. Interacts with the putative helicase-primase complex subunit; this interaction may coordinate leading and lagging strand DNA synthesis at the replication fork.

It localises to the host nucleus. The enzyme catalyses DNA(n) + a 2'-deoxyribonucleoside 5'-triphosphate = DNA(n+1) + diphosphate. It carries out the reaction Endonucleolytic cleavage to 5'-phosphomonoester.. Replicates viral genomic DNA. The replication complex is composed of six viral proteins: the DNA polymerase, processivity factor, primase, primase-associated factor, helicase, and ssDNA-binding protein. Additionally, the polymerase contains an intrinsic ribonuclease H (RNase H) activity that specifically degrades RNA/DNA heteroduplexes or duplex DNA substrates in the 5' to 3' direction. Therefore, it can catalyze the excision of the RNA primers that initiate the synthesis of Okazaki fragments at a replication fork during viral DNA replication. In Human herpesvirus 8 type P (isolate GK18) (HHV-8), this protein is DNA polymerase catalytic subunit (ORF9).